A 466-amino-acid chain; its full sequence is Chromosomal replication initiator protein DnaA (466 aa).

The tract at residues 1 to 77 (MSQEIWADVL…GAEHPQVEFQ (77 aa)) is domain I, interacts with DnaA modulators. The tract at residues 77–121 (QVLPAAQDALLLPNDPPPAPEAAAPTPKTKAAPTPPPSTPGDNRK) is domain II. Residues 87–122 (LLPNDPPPAPEAAAPTPKTKAAPTPPPSTPGDNRKT) form a disordered region. A compositionally biased stretch (low complexity) spans 97 to 108 (EAAAPTPKTKAA). A domain III, AAA+ region region spans residues 122–338 (TLNPKYTFEN…GALMRVVAFA (217 aa)). ATP contacts are provided by Gly-166, Gly-168, Lys-169, and Thr-170. A domain IV, binds dsDNA region spans residues 339 to 466 (SLNNVPFSRA…GKEEEEEVGA (128 aa)).

It belongs to the DnaA family. Oligomerizes as a right-handed, spiral filament on DNA at oriC.

Its subcellular location is the cytoplasm. Plays an essential role in the initiation and regulation of chromosomal replication. ATP-DnaA binds to the origin of replication (oriC) to initiate formation of the DNA replication initiation complex once per cell cycle. Binds the DnaA box (a 9 base pair repeat at the origin) and separates the double-stranded (ds)DNA. Forms a right-handed helical filament on oriC DNA; dsDNA binds to the exterior of the filament while single-stranded (ss)DNA is stabiized in the filament's interior. The ATP-DnaA-oriC complex binds and stabilizes one strand of the AT-rich DNA unwinding element (DUE), permitting loading of DNA polymerase. After initiation quickly degrades to an ADP-DnaA complex that is not apt for DNA replication. Binds acidic phospholipids. Functionally, strand separation requires the DnaA boxes and adjacent DnaA-trio motifs but works equally well with ADP or ATP. This Deinococcus radiodurans (strain ATCC 13939 / DSM 20539 / JCM 16871 / CCUG 27074 / LMG 4051 / NBRC 15346 / NCIMB 9279 / VKM B-1422 / R1) protein is Chromosomal replication initiator protein DnaA.